A 397-amino-acid chain; its full sequence is 2-deoxy-scyllo-inosose synthase (397 aa).

NAD(+) contacts are provided by residues Asp41, Glu71–Lys74, Gly103–Asn107, Thr127–Ser128, Ser138–Lys140, and Lys149–Asn150. Residue Lys140 is part of the active site. Position 182 (Glu182) interacts with Co(2+). Residue Glu242 is part of the active site. Co(2+) is bound by residues His245 and His261.

This sequence belongs to the sugar phosphate cyclases superfamily. DOI synthase family. NAD(+) serves as cofactor. It depends on Co(2+) as a cofactor.

The catalysed reaction is D-glucose 6-phosphate = 2-deoxy-L-scyllo-inosose + phosphate. It participates in metabolic intermediate biosynthesis; 2-deoxystreptamine biosynthesis; 2-deoxystreptamine from D-glucose 6-phosphate: step 1/4. Its pathway is antibiotic biosynthesis; gentamicin biosynthesis. Its function is as follows. Catalyzes the intramolecular carbocycle formation from D-glucose-6-phosphate to 2-deoxy-scyllo-inosose (DOI). The protein is 2-deoxy-scyllo-inosose synthase (gtmA) of Micromonospora echinospora (Micromonospora purpurea).